Here is a 411-residue protein sequence, read N- to C-terminus: Glutamate dehydrogenase 2 (411 aa).

Residue K102 is part of the active site.

This sequence belongs to the Glu/Leu/Phe/Val dehydrogenases family.

The protein resides in the mitochondrion. It carries out the reaction L-glutamate + NAD(+) + H2O = 2-oxoglutarate + NH4(+) + NADH + H(+). The enzyme catalyses L-glutamate + NADP(+) + H2O = 2-oxoglutarate + NH4(+) + NADPH + H(+). This Arabidopsis thaliana (Mouse-ear cress) protein is Glutamate dehydrogenase 2 (GDH2).